The following is a 1157-amino-acid chain: MPPPPRLLFLLVMLLVVAAPGAPVFGANAPPEVKAEIDALLMFRSGLRDPYAAMSGWNASSPSAPCSWRGVACAAGTGRVVELALPKLRLSGAISPALSSLVYLEKLSLRSNSLSGTIPASLSRISSLRAVYLQYNSLSGPIPQSFLANLTNLQTFDVSGNLLSGPVPVSFPPSLKYLDLSSNAFSGTIPANVSASATSLQFLNLSFNRLRGTVPASLGTLQDLHYLWLDGNLLEGTIPSALSNCSALLHLSLQGNALRGILPPAVAAIPSLQILSVSRNRLTGAIPAAAFGGVGNSSLRIVQVGGNAFSQVDVPVSLGKDLQVVDLRANKLAGPFPSWLAGAGGLTVLDLSGNAFTGEVPPAVGQLTALQELRLGGNAFTGTVPAEIGRCGALQVLDLEDNRFSGEVPAALGGLRRLREVYLGGNSFSGQIPASLGNLSWLEALSTPGNRLTGDLPSELFVLGNLTFLDLSDNKLAGEIPPSIGNLAALQSLNLSGNSFSGRIPSNIGNLLNLRVLDLSGQKNLSGNLPAELFGLPQLQYVSLAGNSFSGDVPEGFSSLWSLRHLNLSVNSFTGSMPATYGYLPSLQVLSASHNRICGELPVELANCSNLTVLDLRSNQLTGPIPGDFARLGELEELDLSHNQLSRKIPPEISNCSSLVTLKLDDNHLGGEIPASLSNLSKLQTLDLSSNNLTGSIPASLAQIPGMLSLNVSQNELSGEIPAMLGSRFGTPSVFASNPNLCGPPLENECSAYRQHRRRQRLQRLALLIGVVAATVLLLVLFCCCCVYSLLRWRRRFIEKRDGVKKRRRSPGRGSGSSGTSTDSVSQPKLIMFNSRITYADTVEATRQFDEENVLSRGRHGLVFKACYNDGTVLAILRLPSTSSDGAVVIEEGSFRKEAESLGKVKHRNLTVLRGYYAGPPPDVRLLVYDYMPNGNLATLLQEASHQDGHILNWPMRHLIALGVSRGLAFLHQSGVVHGDVKPQNILFDADFEPHLSDFGLEPMVVTAGAAAAAAAASTSATTTVGSLGYVAPDAAAAGQATREGDVYSFGIVLLELLTGRRPGMFAGEDEDIVKWVKRQLQRGAVAELLEPGLLELDPESSEWEEFLLGIKVGLLCTAPDPLDRPAMGDVVFMLEGCRVGPDIPSSADPTSQPSPA.

The signal sequence occupies residues 1-21 (MPPPPRLLFLLVMLLVVAAPG). N-linked (GlcNAc...) asparagine glycosylation is present at N58. 26 LRR repeats span residues 101 to 125 (LVYL…LSRI), 127 to 149 (SLRA…FLAN), 150 to 172 (LTNL…VSFP), 173 to 196 (PSLK…VSAS), 198 to 220 (TSLQ…SLGT), 221 to 245 (LQDL…LSNC), 247 to 269 (ALLH…VAAI), 270 to 293 (PSLQ…AFGG), 296 to 319 (NSSL…VSLG), 320 to 343 (KDLQ…LAGA), 344 to 367 (GGLT…VGQL), 368 to 391 (TALQ…IGRC), 393 to 414 (ALQV…ALGG), 415 to 439 (LRRL…LGNL), 440 to 463 (SWLE…LFVL), 464 to 487 (GNLT…IGNL), 489 to 511 (ALQS…IGNL), 513 to 536 (NLRV…LFGL), 537 to 559 (PQLQ…GFSS), 561 to 583 (WSLR…TYGY), 584 to 608 (LPSL…LANC), 609 to 631 (SNLT…DFAR), 632 to 656 (LGEL…ISNC), 658 to 680 (SLVT…LSNL), 681 to 704 (SKLQ…LAQI), and 706 to 728 (GMLS…LGSR). An N-linked (GlcNAc...) asparagine glycan is attached at N149. N192, N204, and N244 each carry an N-linked (GlcNAc...) asparagine glycan. N-linked (GlcNAc...) asparagine glycosylation is present at N296. N-linked (GlcNAc...) asparagine glycosylation occurs at N438. Residues N465, N494, and N524 are each glycosylated (N-linked (GlcNAc...) asparagine). 7 N-linked (GlcNAc...) asparagine glycosylation sites follow: N567, N607, N610, N655, N679, N692, and N711. Residues 765–785 (LALLIGVVAATVLLLVLFCCC) traverse the membrane as a helical segment. A disordered region spans residues 804 to 825 (VKKRRRSPGRGSGSSGTSTDSV). The 296-residue stretch at 849 to 1144 (FDEENVLSRG…LEGCRVGPDI (296 aa)) folds into the Protein kinase domain. ATP contacts are provided by residues 855–863 (LSRGRHGLV), 930–932 (DYM), 936–939 (NLAT), 980–985 (DVKPQN), and D998.

It belongs to the protein kinase superfamily. Ser/Thr protein kinase family. As to expression, expressed in developing culm, coleoptile, primary root, young spikelet, young leaf blade and leaf sheath, floral meristem primordia, stamen primordia, and lemma and palea primordia.

It localises to the cell membrane. Its function is as follows. Functions in the early stages of organ development by regulating cell division rate. Is probably involved in the regulation of a number of cell-cycle genes. May act as regulator of brassinosteroid (BR) signaling and cell-cycle controlling organ growth. The chain is Probable inactive leucine-rich repeat receptor kinase XIAO from Oryza sativa subsp. japonica (Rice).